Consider the following 237-residue polypeptide: Undecaprenyl-diphosphatase (237 aa).

A run of 7 helical transmembrane segments spans residues 38 to 58 (QTAV…FDGI), 65 to 85 (WRII…GVLF), 92 to 112 (LFSS…ILMF), 126 to 146 (MSFL…FPGI), 166 to 186 (ALQY…ILGL), 191 to 211 (VTIL…YVLS), and 217 to 237 (GKIW…YLVG).

Belongs to the UppP family.

It is found in the cell inner membrane. It carries out the reaction di-trans,octa-cis-undecaprenyl diphosphate + H2O = di-trans,octa-cis-undecaprenyl phosphate + phosphate + H(+). Functionally, catalyzes the dephosphorylation of undecaprenyl diphosphate (UPP). Confers resistance to bacitracin. The protein is Undecaprenyl-diphosphatase of Thermotoga sp. (strain RQ2).